The primary structure comprises 876 residues: Radial spoke head 10 homolog B (876 aa).

2 stretches are compositionally biased toward basic and acidic residues: residues 1 to 16 and 57 to 66; these read MVKE…DKSA and PKRDSEHTYQ. A disordered region spans residues 1 to 72; sequence MVKEKKKADK…HTYQSEDETQ (72 aa). 10 MORN repeats span residues 86 to 108, 109 to 131, 132 to 154, 155 to 177, 179 to 201, 204 to 226, 227 to 249, 251 to 273, 284 to 306, and 307 to 329; these read YEGE…GGNT, YHGM…DGLK, YEGD…DGST, YEGE…TQPV, YIGH…QEGT, YEGD…SGNI, YEGQ…TTNE, YTGH…LKRI, YIGA…SGAM, and YEGE…NGRV. Disordered regions lie at residues 360–386 and 841–876; these read SQRS…LDGS and EPPE…KKKK. A compositionally biased stretch (basic and acidic residues) spans 373–386; it reads ADREPETLRKLDGS. Positions 752–841 form a coiled coil; that stretch reads EKYEKSKDEQ…FELDITVLKE (90 aa).

In terms of assembly, interacts with RSPH6A. Does not appear to be part of the axonemal radial spoke complexes 1 or 2.

It localises to the cytoplasm. The protein resides in the cytoskeleton. It is found in the cilium axoneme. Its subcellular location is the cell projection. The protein localises to the cilium. It localises to the flagellum. Its function is as follows. May function as part of the axonemal radial spoke complex 3 (RS3). Radial spoke complexes are important for ciliary motility. The protein is Radial spoke head 10 homolog B (Rsph10b) of Rattus norvegicus (Rat).